Here is a 455-residue protein sequence, read N- to C-terminus: Ribosome biogenesis protein NOP53 (455 aa).

Residues 1–15 show a composition bias toward polar residues; sequence MAPTNLTKKPSQYKQ. The interval 1–25 is disordered; it reads MAPTNLTKKPSQYKQSSRKGKKAWR. A compositionally biased stretch (basic residues) spans 16–25; that stretch reads SSRKGKKAWR. Residue serine 31 is modified to Phosphoserine. Residues 264–333 are disordered; it reads HLMETLDDNE…RNKAKRHEEK (70 aa). Residues 268-294 are compositionally biased toward acidic residues; it reads TLDDNEEEESSSNEEEEEEEEENENEN. The segment covering 314–328 has biased composition (basic residues); the sequence is VKNKKKTKYQRNKAK.

It belongs to the NOP53 family. As to quaternary structure, interacts with CBF5, FPR3, FPR4, NOP2, PIH1, RRN3, RRP6 and PAP2. Interacts with pre-60S ribosomal particles.

It localises to the nucleus. It is found in the nucleolus. The protein resides in the nucleoplasm. Late-acting factor in the nuclear maturation of 60S ribosomal subunits, which is required for normal acquisition of export competence. Required for the export of the large subunit. Acts to stimulate the RNase activity of the exosome complex, and may recruit the exosome to 7S pre-rRNA for processing. Associates with numerous RNAs including the 27S and 7S pre-rRNAs and the box H/ACA snoRNA snR37. Also interacts (via N-terminal region) with the mature 25S rRNA and the mature 5.8S rRNA. This is Ribosome biogenesis protein NOP53 from Saccharomyces cerevisiae (strain ATCC 204508 / S288c) (Baker's yeast).